The following is a 137-amino-acid chain: Probable S-adenosyl-L-methionine-binding protein MTH_1797 (137 aa).

The TsaA-like domain maps to 8–137 (IRPVGVVRSP…YYEDIDSLGF (130 aa)). S-adenosyl-L-methionine is bound by residues 25–27 (PAQ), 63–64 (HL), arginine 87, leucine 97, and 117–120 (LDGS).

This sequence belongs to the tRNA methyltransferase O family.

This is Probable S-adenosyl-L-methionine-binding protein MTH_1797 from Methanothermobacter thermautotrophicus (strain ATCC 29096 / DSM 1053 / JCM 10044 / NBRC 100330 / Delta H) (Methanobacterium thermoautotrophicum).